Consider the following 128-residue polypeptide: MRHRKSGRHLSRTSSHRKAMFQNMAVSLFEHELIKTTLPKAKELRRVAEPLITLAKTDSLANRRLAFDRTRSKAIVGKLFNDLGKRYATREGGYLRILKCGFRAGDNAPMAYVELVDRAVGGEAVSAE.

Belongs to the bacterial ribosomal protein bL17 family. As to quaternary structure, part of the 50S ribosomal subunit. Contacts protein L32.

The sequence is that of Large ribosomal subunit protein bL17 from Pseudomonas fluorescens (strain ATCC BAA-477 / NRRL B-23932 / Pf-5).